The sequence spans 332 residues: Ferredoxin--NADP reductase (332 aa).

T20, E39, Q47, Y52, V92, F126, D288, and S329 together coordinate FAD.

This sequence belongs to the ferredoxin--NADP reductase type 2 family. Homodimer. FAD is required as a cofactor.

The enzyme catalyses 2 reduced [2Fe-2S]-[ferredoxin] + NADP(+) + H(+) = 2 oxidized [2Fe-2S]-[ferredoxin] + NADPH. This Geobacillus thermodenitrificans (strain NG80-2) protein is Ferredoxin--NADP reductase.